A 162-amino-acid chain; its full sequence is MKKIIFAGGCFWGVEAYFNTIDGVLNTKVGYANGNTEDPTYEDVCTDSTGYAEACYIEYDEKQLKLEKLIDAYWKVVDPTLKNRQGHDEGTQYRTGIYYVDEEDLKVILESKDKEQEKYDAPIVTEILPLKNFYDAEEYHQKYLDKNPNGYCHIPKELLKKH.

Cys10 is a catalytic residue.

This sequence belongs to the MsrA Met sulfoxide reductase family.

It carries out the reaction L-methionyl-[protein] + [thioredoxin]-disulfide + H2O = L-methionyl-(S)-S-oxide-[protein] + [thioredoxin]-dithiol. The enzyme catalyses [thioredoxin]-disulfide + L-methionine + H2O = L-methionine (S)-S-oxide + [thioredoxin]-dithiol. Its function is as follows. Has an important function as a repair enzyme for proteins that have been inactivated by oxidation. Catalyzes the reversible oxidation-reduction of methionine sulfoxide in proteins to methionine. The protein is Peptide methionine sulfoxide reductase MsrA of Clostridium acetobutylicum (strain ATCC 824 / DSM 792 / JCM 1419 / IAM 19013 / LMG 5710 / NBRC 13948 / NRRL B-527 / VKM B-1787 / 2291 / W).